A 496-amino-acid polypeptide reads, in one-letter code: Galactose-1-phosphate uridylyltransferase (496 aa).

The protein belongs to the galactose-1-phosphate uridylyltransferase type 2 family.

It localises to the cytoplasm. It carries out the reaction alpha-D-galactose 1-phosphate + UDP-alpha-D-glucose = alpha-D-glucose 1-phosphate + UDP-alpha-D-galactose. It participates in carbohydrate metabolism; galactose metabolism. The chain is Galactose-1-phosphate uridylyltransferase from Staphylococcus saprophyticus subsp. saprophyticus (strain ATCC 15305 / DSM 20229 / NCIMB 8711 / NCTC 7292 / S-41).